Reading from the N-terminus, the 149-residue chain is UPF0260 protein Pfl01_1392 (149 aa).

Belongs to the UPF0260 family.

This is UPF0260 protein Pfl01_1392 from Pseudomonas fluorescens (strain Pf0-1).